The sequence spans 329 residues: Putative 1-aminocyclopropane-1-carboxylate deaminase (329 aa).

Position 54 is an N6-(pyridoxal phosphate)lysine (lysine 54).

The protein belongs to the ACC deaminase/D-cysteine desulfhydrase family. The cofactor is pyridoxal 5'-phosphate.

The catalysed reaction is 1-aminocyclopropane-1-carboxylate + H2O = 2-oxobutanoate + NH4(+). The protein is Putative 1-aminocyclopropane-1-carboxylate deaminase of Pyrococcus furiosus (strain ATCC 43587 / DSM 3638 / JCM 8422 / Vc1).